The sequence spans 466 residues: Asparagine--tRNA ligase (466 aa).

This sequence belongs to the class-II aminoacyl-tRNA synthetase family. As to quaternary structure, homodimer.

The protein resides in the cytoplasm. The catalysed reaction is tRNA(Asn) + L-asparagine + ATP = L-asparaginyl-tRNA(Asn) + AMP + diphosphate + H(+). The polypeptide is Asparagine--tRNA ligase (Shewanella putrefaciens (strain CN-32 / ATCC BAA-453)).